Here is a 388-residue protein sequence, read N- to C-terminus: Outer membrane protein assembly factor BamB (388 aa).

A signal peptide spans 1-17 (MVLSLLSVMLLSGYKFL).

The protein belongs to the BamB family. As to quaternary structure, part of the Bam complex, which is composed of the outer membrane protein BamA, and four lipoproteins BamB, BamC, BamD and BamE.

Its subcellular location is the cell outer membrane. Part of the outer membrane protein assembly complex, which is involved in assembly and insertion of beta-barrel proteins into the outer membrane. The polypeptide is Outer membrane protein assembly factor BamB (Moranella endobia (strain PCIT)).